The following is a 200-amino-acid chain: Adenylate kinase (200 aa).

Position 10–15 (10–15 (GAGKGT)) interacts with ATP. The NMP stretch occupies residues 30–59 (STGDMLRAAVAAGTPVGLEAKAVMESGGLV). AMP-binding positions include Thr31, Arg36, 57–59 (GLV), 85–88 (GFPR), and Gln92. Residues 126 to 142 (KRAAETLARGQAVRKDD) are LID. Arg127 serves as a coordination point for ATP. Positions 139 and 150 each coordinate AMP. Gln178 is an ATP binding site.

This sequence belongs to the adenylate kinase family. As to quaternary structure, monomer.

Its subcellular location is the cytoplasm. The enzyme catalyses AMP + ATP = 2 ADP. It participates in purine metabolism; AMP biosynthesis via salvage pathway; AMP from ADP: step 1/1. Functionally, catalyzes the reversible transfer of the terminal phosphate group between ATP and AMP. Plays an important role in cellular energy homeostasis and in adenine nucleotide metabolism. This chain is Adenylate kinase, found in Methylobacterium radiotolerans (strain ATCC 27329 / DSM 1819 / JCM 2831 / NBRC 15690 / NCIMB 10815 / 0-1).